We begin with the raw amino-acid sequence, 255 residues long: Pyrroloquinoline-quinone synthase (255 aa).

This sequence belongs to the PqqC family.

The enzyme catalyses 6-(2-amino-2-carboxyethyl)-7,8-dioxo-1,2,3,4,7,8-hexahydroquinoline-2,4-dicarboxylate + 3 O2 = pyrroloquinoline quinone + 2 H2O2 + 2 H2O + H(+). It participates in cofactor biosynthesis; pyrroloquinoline quinone biosynthesis. In terms of biological role, ring cyclization and eight-electron oxidation of 3a-(2-amino-2-carboxyethyl)-4,5-dioxo-4,5,6,7,8,9-hexahydroquinoline-7,9-dicarboxylic-acid to PQQ. In Cereibacter sphaeroides (strain ATCC 17029 / ATH 2.4.9) (Rhodobacter sphaeroides), this protein is Pyrroloquinoline-quinone synthase.